The primary structure comprises 259 residues: Bisphosphoglycerate mutase (259 aa).

At serine 2 the chain carries N-acetylserine. Substrate is bound by residues 10–17 (RHGEGQWN), 23–24 (CS), arginine 62, 89–92 (ERHY), arginine 100, and 116–117 (RR). Histidine 11 (tele-phosphohistidine intermediate) is an active-site residue. Catalysis depends on glutamate 89, which acts as the Proton donor/acceptor. A Phosphothreonine modification is found at threonine 122. Substrate is bound at residue 189-190 (GN).

This sequence belongs to the phosphoglycerate mutase family. BPG-dependent PGAM subfamily. Homodimer. Expressed in red blood cells. Expressed in placenta (labyrinthine trophoblasts).

The enzyme catalyses (2R)-3-phospho-glyceroyl phosphate = (2R)-2,3-bisphosphoglycerate + H(+). It catalyses the reaction (2R)-2-phosphoglycerate = (2R)-3-phosphoglycerate. With respect to regulation, at alkaline pH BPGM favors the synthase reaction; however, at lower pH the phosphatase reaction is dominant. Inhibited by citrate. Plays a major role in regulating hemoglobin oxygen affinity by controlling the levels of its allosteric effector 2,3-bisphosphoglycerate (2,3-BPG). Also exhibits mutase (EC 5.4.2.11) activity. In Mus musculus (Mouse), this protein is Bisphosphoglycerate mutase (Bpgm).